A 188-amino-acid polypeptide reads, in one-letter code: Phosphatidylinositol N-acetylglucosaminyltransferase subunit H (188 aa).

Belongs to the PIGH family. In terms of assembly, component of the glycosylphosphatidylinositol-N-acetylglucosaminyltransferase (GPI-GnT) complex composed at least by PIGA, PIGC, PIGH, PIGP, PIGQ, PIGY and DPM2. Interacts with PIGQ.

Its subcellular location is the cytoplasm. Its pathway is glycolipid biosynthesis; glycosylphosphatidylinositol-anchor biosynthesis. Its function is as follows. Part of the glycosylphosphatidylinositol-N-acetylglucosaminyltransferase (GPI-GnT) complex that catalyzes the transfer of N-acetylglucosamine from UDP-N-acetylglucosamine to phosphatidylinositol and participates in the first step of GPI biosynthesis. This is Phosphatidylinositol N-acetylglucosaminyltransferase subunit H from Mus musculus (Mouse).